Here is a 327-residue protein sequence, read N- to C-terminus: Malate dehydrogenase (327 aa).

11–17 is a binding site for NAD(+); it reads GAAGQIA. Arginine 92 and arginine 98 together coordinate substrate. NAD(+) is bound by residues asparagine 105, glutamine 112, and 128-130; that span reads VGN. Residues asparagine 130 and arginine 160 each contribute to the substrate site. Histidine 185 serves as the catalytic Proton acceptor.

The protein belongs to the LDH/MDH superfamily. MDH type 2 family.

The enzyme catalyses (S)-malate + NAD(+) = oxaloacetate + NADH + H(+). In terms of biological role, catalyzes the reversible oxidation of malate to oxaloacetate. In Magnetococcus marinus (strain ATCC BAA-1437 / JCM 17883 / MC-1), this protein is Malate dehydrogenase.